Here is a 1265-residue protein sequence, read N- to C-terminus: 5-oxoprolinase (1265 aa).

It belongs to the oxoprolinase family. In terms of assembly, homodimer.

The protein localises to the cytoplasm. It localises to the cytosol. It catalyses the reaction 5-oxo-L-proline + ATP + 2 H2O = L-glutamate + ADP + phosphate + H(+). In terms of biological role, catalyzes the cleavage of 5-oxo-L-proline to form L-glutamate coupled to the hydrolysis of ATP to ADP and inorganic phosphate. In Dictyostelium discoideum (Social amoeba), this protein is 5-oxoprolinase (oplah).